We begin with the raw amino-acid sequence, 353 residues long: UPF0283 membrane protein YcjF (353 aa).

A run of 3 helical transmembrane segments spans residues 70-90 (MVMG…VQWT), 100-120 (VALG…GSVV), and 213-233 (ESTL…FIAW).

This sequence belongs to the UPF0283 family.

The protein resides in the cell inner membrane. The protein is UPF0283 membrane protein YcjF of Shigella sonnei (strain Ss046).